A 1072-amino-acid polypeptide reads, in one-letter code: DNA-directed RNA polymerase subunit beta (1072 aa).

The protein belongs to the RNA polymerase beta chain family. In terms of assembly, in plastids the minimal PEP RNA polymerase catalytic core is composed of four subunits: alpha, beta, beta', and beta''. When a (nuclear-encoded) sigma factor is associated with the core the holoenzyme is formed, which can initiate transcription.

The protein localises to the plastid. Its subcellular location is the chloroplast. It carries out the reaction RNA(n) + a ribonucleoside 5'-triphosphate = RNA(n+1) + diphosphate. Its function is as follows. DNA-dependent RNA polymerase catalyzes the transcription of DNA into RNA using the four ribonucleoside triphosphates as substrates. The sequence is that of DNA-directed RNA polymerase subunit beta from Draba nemorosa (Woodland whitlowgrass).